We begin with the raw amino-acid sequence, 520 residues long: MDIVIVVISILLALIVGIVVGYLVRRSIAEAKISSAERLAKQIVEEAHRNADAAKKEALLEAKDETHKFRQQAEDEIRERRMEAQKQENRLMQKEENLDRKSETLDKRESSLESKEQSLTEQQQQIEEMKSKVEAMKDEQQAELERISGYTSEQAKQIILERIEKEVQHESAVLIKESETRAKEEADKKAKNILSLALQRCAADHVAETTVSVVNLPNDEMKGRIIGREGRNIRTLETLTGIDLIIDDTPEAVILSGFDPIRREIARMALEKLVQDGRIHPARIEEMVEKSRREVDEYIREVGEETTFEVGVHGLHPDLVKILGRLKYRTSYGQNGLKHSAEVAYLSGLLAAELGEDVTLARRAGLLHDIGKAIDHEVEGSHVEIGKELAMKYKEHEVVINSIASHHGDEEATSIIAVLVAAADALSAARPGARSETLENYIKRLEKLEEISESFDGVEKSFAIQAGREIRIMVRPDEIDDIESISIARDIRKRIEGELDYPGHIKVTVIRETRAVEYAK.

The chain crosses the membrane as a helical span at residues 3 to 23 (IVIVVISILLALIVGIVVGYL). Over residues 81–118 (RMEAQKQENRLMQKEENLDRKSETLDKRESSLESKEQS) the composition is skewed to basic and acidic residues. Residues 81 to 125 (RMEAQKQENRLMQKEENLDRKSETLDKRESSLESKEQSLTEQQQQ) form a disordered region. Residues 210 to 273 (TVSVVNLPND…EIARMALEKL (64 aa)) form the KH domain. An HD domain is found at 336–429 (GLKHSAEVAY…VAAADALSAA (94 aa)).

Belongs to the RNase Y family.

The protein resides in the cell membrane. Endoribonuclease that initiates mRNA decay. In Oceanobacillus iheyensis (strain DSM 14371 / CIP 107618 / JCM 11309 / KCTC 3954 / HTE831), this protein is Ribonuclease Y.